Consider the following 819-residue polypeptide: DNA replication licensing factor Mcm3 (819 aa).

The MCM domain occupies 290–496; sequence IFELLSKSLA…DVDQMISDHV (207 aa). Positions 348, 388, 389, 390, and 392 each coordinate ADP. Residues 472 to 475 carry the Arginine finger motif; it reads SRFD. The residue at position 522 (Ser522) is a Phosphoserine. A Phosphotyrosine modification is found at Tyr538. The disordered stretch occupies residues 655–717; it reads DRPSKRRRNS…DAGDLTRRET (63 aa). 4 positions are modified to phosphoserine: Ser664, Ser666, Ser680, and Ser682. Phosphothreonine is present on residues Thr690 and Thr692. Ser697, Ser735, and Ser739 each carry phosphoserine.

It belongs to the MCM family. In terms of assembly, component of the Mcm2-7 complex. The complex forms a toroidal hexameric ring with the proposed subunit order Mcm2-Mcm6-Mcm4-Mcm7-Mcm3-Mcm5.

It localises to the nucleus. The protein resides in the chromosome. It carries out the reaction ATP + H2O = ADP + phosphate + H(+). Acts as a component of the Mcm2-7 complex (Mcm complex) (Mcm complex) which is the putative replicative helicase essential for 'once per cell cycle' DNA replication initiation and elongation in eukaryotic cells. Core component of CDC45-MCM-GINS (CMG) helicase, the molecular machine that unwinds template DNA during replication, and around which the replisome is built. The active ATPase sites in the Mcm2-7 ring are formed through the interaction surfaces of two neighboring subunits such that a critical structure of a conserved arginine finger motif is provided in trans relative to the ATP-binding site of the Walker A box of the adjacent subunit. The six ATPase active sites, however, are likely to contribute differentially to the complex helicase activity. The sequence is that of DNA replication licensing factor Mcm3 (Mcm3) from Drosophila melanogaster (Fruit fly).